Here is a 360-residue protein sequence, read N- to C-terminus: Glycoprotein-N-acetylgalactosamine 3-beta-galactosyltransferase 1 (360 aa).

Topologically, residues 1-7 are cytoplasmic; the sequence is MSIICAK. The helical; Signal-anchor for type II membrane protein transmembrane segment at 8–28 threads the bilayer; the sequence is VAWLPLTLGTAMGFLITFYLA. The Lumenal portion of the chain corresponds to 29–360; that stretch reads RTLLERNSQP…SDFLEPPMES (332 aa). Cysteine 79 and cysteine 103 form a disulfide bridge. Positions 82, 126, 127, 128, and 134 each coordinate UDP. An N-linked (GlcNAc...) asparagine glycan is attached at asparagine 148. Aspartate 157 is a UDP binding site. Residues aspartate 157 and aspartate 159 each coordinate Mn(2+). Asparagine 173 carries N-linked (GlcNAc...) asparagine glycosylation. A disulfide bridge links cysteine 220 with cysteine 234. Tryptophan 274 contributes to the a glycoprotein binding site. An intrachain disulfide couples cysteine 289 to cysteine 290. UDP is bound by residues histidine 298 and tyrosine 299. Histidine 298 lines the Mn(2+) pocket. 2 N-linked (GlcNAc...) asparagine glycosylation sites follow: asparagine 341 and asparagine 347.

Belongs to the glycosyltransferase 31 family. Beta3-Gal-T subfamily. In terms of assembly, homodimer; disulfide-linked. The cofactor is Mn(2+).

Its subcellular location is the membrane. It carries out the reaction an N-acetyl-alpha-D-galactosaminyl derivative + UDP-alpha-D-galactose = a beta-D-galactosyl-(1-&gt;3)-N-acetyl-alpha-D-galactosaminyl derivative + UDP + H(+). It participates in protein modification; protein glycosylation. Its function is as follows. Glycosyltransferase that generates the core 1 O-glycan Gal-beta1-3GalNAc-alpha1-Ser/Thr (T antigen), which is a precursor for many extended O-glycans in glycoproteins. This Xenopus laevis (African clawed frog) protein is Glycoprotein-N-acetylgalactosamine 3-beta-galactosyltransferase 1 (c1galt1).